A 315-amino-acid polypeptide reads, in one-letter code: Methionyl-tRNA formyltransferase (315 aa).

Position 113–116 (113–116 (SLLP)) interacts with (6S)-5,6,7,8-tetrahydrofolate.

Belongs to the Fmt family.

It carries out the reaction L-methionyl-tRNA(fMet) + (6R)-10-formyltetrahydrofolate = N-formyl-L-methionyl-tRNA(fMet) + (6S)-5,6,7,8-tetrahydrofolate + H(+). Attaches a formyl group to the free amino group of methionyl-tRNA(fMet). The formyl group appears to play a dual role in the initiator identity of N-formylmethionyl-tRNA by promoting its recognition by IF2 and preventing the misappropriation of this tRNA by the elongation apparatus. The sequence is that of Methionyl-tRNA formyltransferase from Shigella dysenteriae serotype 1 (strain Sd197).